The primary structure comprises 249 residues: Uroplakin-3b-like protein 1 (249 aa).

An N-terminal signal peptide occupies residues 1-26; sequence MGPHGKQSVLRMPLLLLLTCVQSGTG. Topologically, residues 27–194 are extracellular; it reads LESINYAPQL…PGSQGKGTVV (168 aa). 3 N-linked (GlcNAc...) asparagine glycosylation sites follow: Asn-63, Asn-82, and Asn-133. Residues 195–215 form a helical membrane-spanning segment; that stretch reads IIAFLSILLAILLVVFLVLVI. At 216 to 249 the chain is on the cytoplasmic side; it reads SACLSTSGSSPEEQVRMRHYHTHHMGSLRAERSS.

It belongs to the uroplakin-3 family.

It localises to the membrane. This Mus musculus (Mouse) protein is Uroplakin-3b-like protein 1.